The chain runs to 209 residues: Immunoglobulin lambda-like polypeptide 1 (209 aa).

The first 30 residues, Met1–Gly30, serve as a signal peptide directing secretion. The interval Val93–Gly104 is j region. The tract at residues Gln105 to Ser209 is c region. Residues Pro110–Ser204 enclose the Ig-like C1-type domain. Cys131 and Cys190 form a disulfide bridge.

As to quaternary structure, interacts with VPREB1A. Interacts with SYNV1/HRD1 (via N-terminus); this interaction leads to increased IGLL1 ubiquitination and degradation in pre-B cells, possibly through a lysosomal, not proteasomal, pathway. In terms of tissue distribution, selectively expressed in pre-B lymphocytes.

The protein resides in the endoplasmic reticulum. It localises to the secreted. Functionally, critical for B-cell development. The sequence is that of Immunoglobulin lambda-like polypeptide 1 (Igll1) from Mus musculus (Mouse).